Consider the following 755-residue polypeptide: Xaa-Pro dipeptidyl-peptidase (755 aa).

Active-site charge relay system residues include Ser348, Asp468, and His498.

Belongs to the peptidase S15 family. As to quaternary structure, homodimer.

The protein resides in the cytoplasm. The enzyme catalyses Hydrolyzes Xaa-Pro-|- bonds to release unblocked, N-terminal dipeptides from substrates including Ala-Pro-|-p-nitroanilide and (sequentially) Tyr-Pro-|-Phe-Pro-|-Gly-Pro-|-Ile.. In terms of biological role, removes N-terminal dipeptides sequentially from polypeptides having unsubstituted N-termini provided that the penultimate residue is proline. This is Xaa-Pro dipeptidyl-peptidase from Streptococcus thermophilus (strain ATCC BAA-491 / LMD-9).